Reading from the N-terminus, the 73-residue chain is Translation initiation factor IF-1 (73 aa).

Residues 1–72 (MAKEDVIEVE…SRGRITYRYR (72 aa)) form the S1-like domain.

Belongs to the IF-1 family. In terms of assembly, component of the 30S ribosomal translation pre-initiation complex which assembles on the 30S ribosome in the order IF-2 and IF-3, IF-1 and N-formylmethionyl-tRNA(fMet); mRNA recruitment can occur at any time during PIC assembly.

It localises to the cytoplasm. In terms of biological role, one of the essential components for the initiation of protein synthesis. Stabilizes the binding of IF-2 and IF-3 on the 30S subunit to which N-formylmethionyl-tRNA(fMet) subsequently binds. Helps modulate mRNA selection, yielding the 30S pre-initiation complex (PIC). Upon addition of the 50S ribosomal subunit IF-1, IF-2 and IF-3 are released leaving the mature 70S translation initiation complex. In Rubrobacter xylanophilus (strain DSM 9941 / JCM 11954 / NBRC 16129 / PRD-1), this protein is Translation initiation factor IF-1.